The sequence spans 36 residues: U1-ectatotoxin-Et1b subunit B (36 aa).

An intrachain disulfide couples Cys-11 to Cys-33.

Belongs to the ectatomin family. Ectatomin-Et subfamily. As to quaternary structure, heterodimer of subunits A and B; disulfide-linked. In terms of tissue distribution, expressed by the venom gland.

It localises to the secreted. It is found in the target cell membrane. In Ectatomma tuberculatum (Selva ant), this protein is U1-ectatotoxin-Et1b subunit B.